The sequence spans 289 residues: ATP synthase subunit a (289 aa).

7 consecutive transmembrane segments (helical) span residues 41–61 (KATA…WLGF), 101–121 (YLLV…IPAA), 129–149 (IAVP…AGIK), 166–186 (TAPL…TLIV), 189–209 (FTLA…LLVF), 222–242 (FVFG…ELVI), and 244–264 (ALQA…AMAH).

Belongs to the ATPase A chain family. F-type ATPases have 2 components, CF(1) - the catalytic core - and CF(0) - the membrane proton channel. CF(1) has five subunits: alpha(3), beta(3), gamma(1), delta(1), epsilon(1). CF(0) has three main subunits: a(1), b(2) and c(9-12). The alpha and beta chains form an alternating ring which encloses part of the gamma chain. CF(1) is attached to CF(0) by a central stalk formed by the gamma and epsilon chains, while a peripheral stalk is formed by the delta and b chains.

It is found in the cell membrane. Key component of the proton channel; it plays a direct role in the translocation of protons across the membrane. The chain is ATP synthase subunit a from Frankia alni (strain DSM 45986 / CECT 9034 / ACN14a).